A 38-amino-acid chain; its full sequence is Iota-conotoxin-like L11.5 (38 aa).

4 disulfides stabilise this stretch: Cys-5–Cys-19, Cys-12–Cys-24, Cys-18–Cys-29, and Cys-23–Cys-36.

This sequence belongs to the conotoxin I1 superfamily. In terms of tissue distribution, expressed by the venom duct.

It localises to the secreted. Its function is as follows. Iota-conotoxins bind to voltage-gated sodium channels (Nav) and act as agonists by shifting the voltage-dependence of activation to more hyperpolarized levels. Produces general excitatory symptoms. This is Iota-conotoxin-like L11.5 from Conus lynceus (Lynceus cone).